Here is a 510-residue protein sequence, read N- to C-terminus: Zinc finger and SCAN domain-containing protein 18 (510 aa).

The interval 1-40 is disordered; the sequence is MLPLEKAFASPRSSPAPPDLPTPGSAAGVQQEEPETIPER. One can recognise an SCAN box domain in the interval 49–131; sequence RLRFREFVYQ…SLVEGLADVL (83 aa). 4 disordered regions span residues 172 to 191, 201 to 231, 263 to 413, and 461 to 510; these read ALGA…SPDP, EAKT…EWGH, TEEL…GKPY, and KTHE…EAQR. Basic and acidic residues-rich tracts occupy residues 214–231 and 263–273; these read QKLK…EWGH and TEELRLVERDP. Residues 288–299 are compositionally biased toward low complexity; the sequence is AGCACEEAAPAG. Residues 344-356 are compositionally biased toward polar residues; it reads DSATGSQRQSVIQ. 2 consecutive C2H2-type zinc fingers follow at residues 413 to 435 and 441 to 463; these read YACG…HSSH and YACQ…QKTH. Positions 491–501 are enriched in low complexity; that stretch reads GGPPESVEGEA.

This sequence belongs to the krueppel C2H2-type zinc-finger protein family.

The protein localises to the nucleus. May be involved in transcriptional regulation. In Homo sapiens (Human), this protein is Zinc finger and SCAN domain-containing protein 18 (ZSCAN18).